The sequence spans 511 residues: Histidine ammonia-lyase (511 aa).

The 5-imidazolinone (Ala-Gly) cross-link spans 142–144 (ASG). Serine 143 bears the 2,3-didehydroalanine (Ser) mark.

It belongs to the PAL/histidase family. In terms of processing, contains an active site 4-methylidene-imidazol-5-one (MIO), which is formed autocatalytically by cyclization and dehydration of residues Ala-Ser-Gly.

It is found in the cytoplasm. It carries out the reaction L-histidine = trans-urocanate + NH4(+). Its pathway is amino-acid degradation; L-histidine degradation into L-glutamate; N-formimidoyl-L-glutamate from L-histidine: step 1/3. This chain is Histidine ammonia-lyase, found in Caulobacter sp. (strain K31).